The chain runs to 373 residues: 3 beta-hydroxysteroid dehydrogenase/Delta 5--&gt;4-isomerase (373 aa).

Y155 (proton acceptor) is an active-site residue. K159 is an NAD(+) binding site. A helical membrane pass occupies residues 288–308 (ISLEYWLAFLLEIVSFLLSPI).

It belongs to the 3-beta-HSD family.

It is found in the endoplasmic reticulum membrane. It localises to the mitochondrion membrane. The catalysed reaction is a 3beta-hydroxy-Delta(5)-steroid + NAD(+) = a 3-oxo-Delta(5)-steroid + NADH + H(+). It catalyses the reaction a 3-oxo-Delta(5)-steroid = a 3-oxo-Delta(4)-steroid. It participates in lipid metabolism; steroid biosynthesis. In terms of biological role, 3-beta-HSD is a bifunctional enzyme, that catalyzes the oxidative conversion of Delta(5)-ene-3-beta-hydroxy steroid, and the oxidative conversion of ketosteroids. The 3-beta-HSD enzymatic system plays a crucial role in the biosynthesis of all classes of hormonal steroids. The chain is 3 beta-hydroxysteroid dehydrogenase/Delta 5--&gt;4-isomerase (HSD3B) from Canis lupus familiaris (Dog).